Here is a 155-residue protein sequence, read N- to C-terminus: MLKQVEIFTDGSCLGNPGPGGYGAILRYRGHEKTFSEGYSLTTNNRMELMAAIVALEALKEHCEVTLSTDSQYVRQGITQWIHNWKKRGWKTAEKKPVKNVDLWKRLDAALGQHQIKWEWVKGHAGHPENERCDELARAAAMNPTQEDVGYQAEA.

The RNase H type-1 domain maps to 1 to 142 (MLKQVEIFTD…CDELARAAAM (142 aa)). Mg(2+) contacts are provided by D10, E48, D70, and D134.

It belongs to the RNase H family. In terms of assembly, monomer. Requires Mg(2+) as cofactor.

The protein localises to the cytoplasm. It catalyses the reaction Endonucleolytic cleavage to 5'-phosphomonoester.. Its function is as follows. Endonuclease that specifically degrades the RNA of RNA-DNA hybrids. The polypeptide is Ribonuclease H (Citrobacter koseri (strain ATCC BAA-895 / CDC 4225-83 / SGSC4696)).